A 444-amino-acid polypeptide reads, in one-letter code: Exodeoxyribonuclease 7 large subunit (444 aa).

The protein belongs to the XseA family. Heterooligomer composed of large and small subunits.

It is found in the cytoplasm. It carries out the reaction Exonucleolytic cleavage in either 5'- to 3'- or 3'- to 5'-direction to yield nucleoside 5'-phosphates.. Bidirectionally degrades single-stranded DNA into large acid-insoluble oligonucleotides, which are then degraded further into small acid-soluble oligonucleotides. This is Exodeoxyribonuclease 7 large subunit from Xylella fastidiosa (strain M23).